The primary structure comprises 126 residues: Protein ApaG (126 aa).

Residues 2-126 (SALDTSIRVE…FRLTTPGLLH (125 aa)) enclose the ApaG domain.

In Shewanella baltica (strain OS195), this protein is Protein ApaG.